The following is a 1078-amino-acid chain: Nonribosomal peptide synthetase aneB (1078 aa).

The interval 20 to 417 (FQQNVLDRPD…HGRKDTQVKI (398 aa)) is adenylation. The Carrier domain occupies 559–635 (MPTTPLERQM…TLCQHVSVRP (77 aa)). Ser596 is subject to O-(pantetheine 4'-phosphoryl)serine. The tract at residues 699 to 1013 (NYTLRLDVKL…HEMGYYGPVT (315 aa)) is condensation.

It belongs to the NRP synthetase family.

It carries out the reaction holo-[peptidyl-carrier protein] + L-proline + ATP = L-prolyl-[peptidyl-carrier protein] + AMP + diphosphate. It functions in the pathway secondary metabolite biosynthesis. In terms of biological role, nonribosomal peptide synthetase; part of the gene cluster that mediates the biosynthesis of aculenes, a unique type of norsesquiterpenes that contain a nordaucane skeleton linked to an L-proline moiety and are of mixed biosynthetic origin. The pathway begins with the synthesis of dauca-4,7-diene by the terpene cyclase aneC using farnesyl pyrophosphate (FPP) as substrate. The cytochrome P450 monooxygenase aneF then performs the initial oxidation at C-12 of dauca-4,7-diene to yield asperaculane D. Asperaculane D is substrate of the cytochrome P450 monooxygenase aneD for C-10 hydroxylation to yield asperaculane E. The cytochrome P450 monooxygenase aneG then converts asperaculane E into aculene D via C-2 oxidation. The monomodular nonribosomal peptide synthase aneB adenylates L-proline and the thiohydrolase aneE transfers this activated L-proline derivative to aculenes D and C to produce respectively aculenes B and A. The dioxygenase aneA converts aculene D into aculene C, and aculene B into aculene A by introducing the 5,6-alkene moiety. Asperculanes A, B, C and F, as well as 14-prolyl asperculane C, might be shunt products of the pathway. In Aspergillus aculeatus (strain ATCC 16872 / CBS 172.66 / WB 5094), this protein is Nonribosomal peptide synthetase aneB.